The chain runs to 159 residues: Growth arrest and DNA damage-inducible protein GADD45 gamma (159 aa).

The segment at 43-86 (VYESAKVLNVDPDNVTFCVLAADEEDEGDIALQIHFTLIQAFCC) is homodimerization.

Belongs to the GADD45 family. As to quaternary structure, undergoes concentration-dependent homodimerization, which is required for growth inhibititory activity and enhances interaction with PCNA. Interacts with GADD45GIP1. Interacts with PCNA.

Functionally, involved in the regulation of growth and apoptosis. Mediates activation of stress-responsive MTK1/MEKK4 MAPKKK. The protein is Growth arrest and DNA damage-inducible protein GADD45 gamma (Gadd45g) of Mus musculus (Mouse).